A 158-amino-acid polypeptide reads, in one-letter code: NAD(P)H-quinone oxidoreductase subunit J, chloroplastic (158 aa).

The protein belongs to the complex I 30 kDa subunit family. As to quaternary structure, NDH is composed of at least 16 different subunits, 5 of which are encoded in the nucleus.

The protein resides in the plastid. It is found in the chloroplast thylakoid membrane. It carries out the reaction a plastoquinone + NADH + (n+1) H(+)(in) = a plastoquinol + NAD(+) + n H(+)(out). It catalyses the reaction a plastoquinone + NADPH + (n+1) H(+)(in) = a plastoquinol + NADP(+) + n H(+)(out). NDH shuttles electrons from NAD(P)H:plastoquinone, via FMN and iron-sulfur (Fe-S) centers, to quinones in the photosynthetic chain and possibly in a chloroplast respiratory chain. The immediate electron acceptor for the enzyme in this species is believed to be plastoquinone. Couples the redox reaction to proton translocation, and thus conserves the redox energy in a proton gradient. In Nuphar advena (Common spatterdock), this protein is NAD(P)H-quinone oxidoreductase subunit J, chloroplastic.